Reading from the N-terminus, the 185-residue chain is Pyruvate/ketoisovalerate oxidoreductases common subunit gamma (185 aa).

As to quaternary structure, heterotetramer of one alpha, one beta, one delta and one gamma chain.

The catalysed reaction is 2 oxidized [2Fe-2S]-[ferredoxin] + pyruvate + CoA = 2 reduced [2Fe-2S]-[ferredoxin] + acetyl-CoA + CO2 + H(+). It catalyses the reaction 3-methyl-2-oxobutanoate + 2 oxidized [2Fe-2S]-[ferredoxin] + CoA = 2-methylpropanoyl-CoA + 2 reduced [2Fe-2S]-[ferredoxin] + CO2 + H(+). In Thermococcus kodakarensis (strain ATCC BAA-918 / JCM 12380 / KOD1) (Pyrococcus kodakaraensis (strain KOD1)), this protein is Pyruvate/ketoisovalerate oxidoreductases common subunit gamma (porG).